Reading from the N-terminus, the 404-residue chain is MEILGGPHFAVAGAGESHGPAVTTIIHGSPPGFRIRRCDVQPFLDRRRPGGNKHGTPRNEKDKVVFLAGLYRDDTDALLTGSKLTVDVDDQSFETEGYEDGFTTGEPIAAIVLSTSKKSGDYTQFSGPTGEVRPGHTDLVKFHQSKGFVDVRGGGRSSYRSTITDVIGGSVARIILRECFGTRFVSSICQVGSLKSKQSLADTLTIDNIDEIETSLGEAEIASIDHEFANEAGELIKETRKRGNSLGAAVEVVAVGVPPLLGQPLYQSLKVRLMGALGGLNAVQSCEIGSGVDVIPRTGSENNDPIRSSGYQSNTHGGLLGGITTGSPLVARVGFKPTSTINLPQDSVNKRLDEIEFELAKGRHDPCVGVRAGVTLESRMAIELLNSVLAYQATAHCGDSIKLF.

Arginine 47 contributes to the NADP(+) binding site. FMN contacts are provided by residues 156 to 158, 281 to 282, glycine 321, 336 to 340, and arginine 363; these read RSS, NA, and KPTST.

It belongs to the chorismate synthase family. In terms of assembly, homotetramer. The cofactor is FMNH2.

The catalysed reaction is 5-O-(1-carboxyvinyl)-3-phosphoshikimate = chorismate + phosphate. The protein operates within metabolic intermediate biosynthesis; chorismate biosynthesis; chorismate from D-erythrose 4-phosphate and phosphoenolpyruvate: step 7/7. In terms of biological role, catalyzes the anti-1,4-elimination of the C-3 phosphate and the C-6 proR hydrogen from 5-enolpyruvylshikimate-3-phosphate (EPSP) to yield chorismate, which is the branch point compound that serves as the starting substrate for the three terminal pathways of aromatic amino acid biosynthesis. This reaction introduces a second double bond into the aromatic ring system. The protein is Chorismate synthase of Rhodopirellula baltica (strain DSM 10527 / NCIMB 13988 / SH1).